A 273-amino-acid polypeptide reads, in one-letter code: tRNA (guanine-N(7)-)-methyltransferase A (273 aa).

S-adenosyl-L-methionine contacts are provided by Gly-86, Glu-109, Arg-111, Asn-142, Ala-143, and Leu-162. Asp-165 is an active-site residue. The interval 166 to 174 (PHFKKTKHK) is alphaC helix. S-adenosyl-L-methionine-binding residues include Thr-240 and Glu-242. Residues 240–248 (TEEGKKVQR) form an alpha6 helix region.

It belongs to the class I-like SAM-binding methyltransferase superfamily. TrmB family. As to quaternary structure, catalytic component of the METTL1-WDR4 complex, composed of mettl1 and wdr4.

It localises to the nucleus. It carries out the reaction guanosine(46) in tRNA + S-adenosyl-L-methionine = N(7)-methylguanosine(46) in tRNA + S-adenosyl-L-homocysteine. It catalyses the reaction a guanosine in mRNA + S-adenosyl-L-methionine = an N(7)-methylguanosine in mRNA + S-adenosyl-L-homocysteine. The catalysed reaction is a guanosine in miRNA + S-adenosyl-L-methionine = an N(7)-methylguanosine in miRNA + S-adenosyl-L-homocysteine. It functions in the pathway tRNA modification; N(7)-methylguanine-tRNA biosynthesis. In terms of biological role, catalytic component of METTL1-WDR4 methyltransferase complex that mediates the formation of N(7)-methylguanine in a subset of RNA species, such as tRNAs, mRNAs and microRNAs (miRNAs). Catalyzes the formation of N(7)-methylguanine at position 46 (m7G46) in a large subset of tRNAs that contain the 5'-RAGGU-3' motif within the variable loop. M7G46 interacts with C13-G22 in the D-loop to stabilize tRNA tertiary structure and protect tRNAs from decay. Also acts as a methyltransferase for a subset of internal N(7)-methylguanine in mRNAs. Internal N(7)-methylguanine methylation of mRNAs in response to stress promotes their relocalization to stress granules, thereby suppressing their translation. Also methylates a specific subset of miRNAs. The sequence is that of tRNA (guanine-N(7)-)-methyltransferase A (mettl1-A) from Xenopus tropicalis (Western clawed frog).